The primary structure comprises 450 residues: Interferon regulatory factor 4 (450 aa).

The IRF tryptophan pentad repeat DNA-binding region spans 21-129 (NGKLRQWLID…DPYKVYRIVP (109 aa)). A phosphoserine; by ROCK2 mark is found at Ser-446 and Ser-447.

This sequence belongs to the IRF family. Interacts with SPIB and DEF6. Interacts with the BATF-JUNB heterodimer. Interacts with BATF (via bZIP domain); the interaction is direct. Directly interacts with NLRP3 in the nucleus of Th2 cells; this interaction enhances IRF4 ability to bind to the IL4 promoter and is required for optimal IRF4-dependent IL4 transcription. Interacts with SPI1. Phosphorylation by ROCK2 regulates IL-17 and IL-21 production. Lymphoid cells.

The protein localises to the nucleus. It is found in the cytoplasm. In terms of biological role, transcriptional activator. Binds to the interferon-stimulated response element (ISRE) of the MHC class I promoter. Binds the immunoglobulin lambda light chain enhancer, together with PU.1. Probably plays a role in ISRE-targeted signal transduction mechanisms specific to lymphoid cells. Involved in CD8(+) dendritic cell differentiation by forming a complex with the BATF-JUNB heterodimer in immune cells, leading to recognition of AICE sequence (5'-TGAnTCA/GAAA-3'), an immune-specific regulatory element, followed by cooperative binding of BATF and IRF4 and activation of genes. This is Interferon regulatory factor 4 from Mus musculus (Mouse).